Reading from the N-terminus, the 226-residue chain is MMTNLFSVFDPSTTILNLSLNWLSTFLGLLIIPSTYWLMPNRFQIIWNNILLTLHKEFKTLLGPNGHNGSTLMFVSLFSLIMFNNFLGLFPYIFTSTSHLTLTLTLAFPLWLSFMLYGWICHTQHMFAHLVPQGTPPVLMPFMVCIETISNVIRPGTLAVRLTANMIAGHLLMTLLGNTGPMSTSYIILSLILITQIALLVLESAVAIIQSYVFAVLSTLYSSEVN.

5 helical membrane passes run 18–38 (LSLNWLSTFLGLLIIPSTYWL), 74–94 (FVSLFSLIMFNNFLGLFPYIF), 100–120 (LTLTLTLAFPLWLSFMLYGWI), 162–182 (LTANMIAGHLLMTLLGNTGPM), and 187–207 (IILSLILITQIALLVLESAVA).

Belongs to the ATPase A chain family. F-type ATPases have 2 components, CF(1) - the catalytic core - and CF(0) - the membrane proton channel. CF(1) has five subunits: alpha(3), beta(3), gamma(1), delta(1), epsilon(1). CF(0) has three main subunits: a, b and c.

Its subcellular location is the mitochondrion inner membrane. In terms of biological role, mitochondrial membrane ATP synthase (F(1)F(0) ATP synthase or Complex V) produces ATP from ADP in the presence of a proton gradient across the membrane which is generated by electron transport complexes of the respiratory chain. F-type ATPases consist of two structural domains, F(1) - containing the extramembraneous catalytic core and F(0) - containing the membrane proton channel, linked together by a central stalk and a peripheral stalk. During catalysis, ATP synthesis in the catalytic domain of F(1) is coupled via a rotary mechanism of the central stalk subunits to proton translocation. Key component of the proton channel; it may play a direct role in the translocation of protons across the membrane. In Aedes aegypti (Yellowfever mosquito), this protein is ATP synthase subunit a.